Consider the following 484-residue polypeptide: Malonate-semialdehyde dehydrogenase 1 (484 aa).

Residues F154, K178, E181, R182, and S231 each coordinate NAD(+). The active-site Nucleophile is C286. E384 contributes to the NAD(+) binding site.

It belongs to the aldehyde dehydrogenase family. IolA subfamily. Homotetramer.

The catalysed reaction is 3-oxopropanoate + NAD(+) + CoA + H2O = hydrogencarbonate + acetyl-CoA + NADH + H(+). The enzyme catalyses 2-methyl-3-oxopropanoate + NAD(+) + CoA + H2O = propanoyl-CoA + hydrogencarbonate + NADH + H(+). It participates in polyol metabolism; myo-inositol degradation into acetyl-CoA; acetyl-CoA from myo-inositol: step 7/7. Functionally, catalyzes the oxidation of malonate semialdehyde (MSA) and methylmalonate semialdehyde (MMSA) into acetyl-CoA and propanoyl-CoA, respectively. Is involved in a myo-inositol catabolic pathway. Bicarbonate, and not CO2, is the end-product of the enzymatic reaction. The protein is Malonate-semialdehyde dehydrogenase 1 of Bacillus licheniformis (strain ATCC 14580 / DSM 13 / JCM 2505 / CCUG 7422 / NBRC 12200 / NCIMB 9375 / NCTC 10341 / NRRL NRS-1264 / Gibson 46).